The chain runs to 364 residues: DNA polymerase IV (364 aa).

In terms of domain architecture, UmuC spans 8–189 (IIHIDMDCYF…LPLTKIPGVG (182 aa)). Mg(2+) is bound by residues Asp-12 and Asp-107. Glu-108 is an active-site residue.

This sequence belongs to the DNA polymerase type-Y family. Monomer. Mg(2+) is required as a cofactor.

The protein resides in the cytoplasm. It carries out the reaction DNA(n) + a 2'-deoxyribonucleoside 5'-triphosphate = DNA(n+1) + diphosphate. In terms of biological role, poorly processive, error-prone DNA polymerase involved in untargeted mutagenesis. Copies undamaged DNA at stalled replication forks, which arise in vivo from mismatched or misaligned primer ends. These misaligned primers can be extended by PolIV. Exhibits no 3'-5' exonuclease (proofreading) activity. May be involved in translesional synthesis, in conjunction with the beta clamp from PolIII. In Shewanella woodyi (strain ATCC 51908 / MS32), this protein is DNA polymerase IV.